The following is a 593-amino-acid chain: Metal-response element-binding transcription factor 2 (593 aa).

A disordered region spans residues 1 to 24; the sequence is MRDSTGAGNSLVHKRSPLRRNQKT. Over residues 12–22 the composition is skewed to basic residues; that stretch reads VHKRSPLRRNQ. Position 24 is a phosphothreonine (Thr24). Residues 44–101 form the Tudor domain; sequence CKFEEGQDVLARWSDGLFYLGTIKKINILKQSCFIIFEDSSKSWVLWKDIQTGATGSG. 2 PHD-type zinc fingers span residues 102–157 and 201–255; these read EMVC…CVFA and QCYC…CSSG. Disordered stretches follow at residues 357 to 410 and 444 to 486; these read VAFK…GPYT and GIAH…TRTG. A Glycyl lysine isopeptide (Lys-Gly) (interchain with G-Cter in SUMO2) cross-link involves residue Lys360. Residues 360-374 are compositionally biased toward basic and acidic residues; that stretch reads KAEKEPEGTSHEFKI. A compositionally biased stretch (polar residues) spans 447–470; that stretch reads HSSNTSDVDLTGASSANETTSASI. Ser452 carries the post-translational modification Phosphoserine. Residue Lys522 forms a Glycyl lysine isopeptide (Lys-Gly) (interchain with G-Cter in SUMO2) linkage.

The protein belongs to the Polycomblike family. Associates with the PRC2 complex, which consists of the core components EED, EZH1 or EZH2, SUZ12, and RBBP4, and various combinations of accessory subunits including AEBP2, JARID2, PHF19, MTF2 and EPOP. Forms a dimeric PRC2.1 (class 1, PRC-PCL) complex consisting of at least SUZ12, RBBP4, and PHF19 or MTF2; PHF19 and MTF2 stabilize the dimeric structure which enhances PRC2 interaction with chromatin.

The protein localises to the nucleus. Polycomb group (PcG) protein that specifically binds histone H3 trimethylated at 'Lys-36' (H3K36me3) and recruits the PRC2 complex, thus enhancing PRC2 H3K27me3 methylation activity. Regulates the transcriptional networks during embryonic stem cell self-renewal and differentiation. Promotes recruitment of the PRC2 complex to the inactive X chromosome in differentiating XX ES cells and PRC2 recruitment to target genes in undifferentiated ES cells. Required to repress Hox genes by enhancing H3K27me3 methylation of the PRC2 complex. In some conditions may act as an inhibitor of PRC2 activity: able to activate the CDKN2A gene and promote cellular senescence by suppressing the catalytic activity of the PRC2 complex locally. Binds to the metal-regulating-element (MRE) of MT1A gene promoter. The polypeptide is Metal-response element-binding transcription factor 2 (Mtf2) (Mus musculus (Mouse)).